We begin with the raw amino-acid sequence, 911 residues long: Alpha-actinin-4 (911 aa).

Residues 1 to 30 (MVDYHAASQSYQYGPSSAGNGAGGGGSMGD) are disordered. The actin-binding stretch occupies residues 1 to 269 (MVDYHAASQS…YVSSFYHAFS (269 aa)). The tract at residues 12–26 (QYGPSSAGNGAGGGG) is interaction with VCL. Tyr-31 bears the Phosphotyrosine mark. The segment at 40 to 61 (RDLLLDPAWEKQQRKTFTAWCN) is interaction with VCL. Calponin-homology (CH) domains follow at residues 50-154 (KQQR…LRFA) and 163-269 (TSAK…HAFS). The LXXLL motif signature appears at 84–88 (LMLLL). Residues 108-126 (KINNVNKALDFIASKGVKL) form an interaction with VCL region. Lys-114 carries the N6-acetyllysine modification. The interval 177–192 (TAPYKNVNVQNFHISW) is polyphosphoinositide (PIP2)-binding. Lys-214 carries the N6-acetyllysine modification. A Phosphothreonine modification is found at Thr-249. Spectrin repeat units follow at residues 293–403 (HLME…WLLN), 413–518 (HLAE…ALEK), 528–639 (QLHL…ALLE), and 649–752 (HLRR…EVEN). Residues Lys-592 and Lys-625 each carry the N6-acetyllysine modification. A Phosphoserine modification is found at Ser-696. Residues 736-911 (WEQLLTTIAR…STALYGESDL (176 aa)) form a mediates interaction with MICALL2 region. EF-hand domains lie at 765-800 (EQMQ…LGYD) and 806-841 (QGEA…ETTD). Asp-778 contacts Ca(2+). Lys-779 bears the N6-acetyllysine mark. Ca(2+)-binding residues include Asp-780 and Glu-789. Lys-859 is modified (N6-acetyllysine). Ser-909 carries the phosphoserine modification.

The protein belongs to the alpha-actinin family. As to quaternary structure, homodimer; antiparallel. Identified in a IGF2BP1-dependent mRNP granule complex containing untranslated mRNAs. Component of the CART complex, at least composed of ACTN4, HGS/HRS, MYO5B and TRIM3. Binds TRIM3 at the N-terminus. Interacts with MAGI1. Interacts with PDLIM2. Identified in a complex with CASK, IQGAP1, MAGI2, NPHS1, SPTAN1 and SPTBN1. Interacts with MICALL2 (preferentially in opened conformation); stimulated by RAB13 activation. Interacts with PPARG and RARA. Binds to VCL; this interaction triggers VCL conformational changes. Interacts with SEPTIN14. Interacts with IGSF8.

It localises to the nucleus. The protein localises to the cytoplasm. Its subcellular location is the cell junction. The protein resides in the cytoskeleton. It is found in the stress fiber. It localises to the perinuclear region. Its function is as follows. F-actin cross-linking protein which is thought to anchor actin to a variety of intracellular structures. This is a bundling protein. Probably involved in vesicular trafficking via its association with the CART complex. The CART complex is necessary for efficient transferrin receptor recycling but not for EGFR degradation. Involved in tight junction assembly in epithelial cells probably through interaction with MICALL2. Links MICALL2 to the actin cytoskeleton and recruits it to the tight junctions. May also function as a transcriptional coactivator, stimulating transcription mediated by the nuclear hormone receptors PPARG and RARA. Association with IGSF8 regulates the immune synapse formation and is required for efficient T-cell activation. The protein is Alpha-actinin-4 of Pongo abelii (Sumatran orangutan).